The following is a 552-amino-acid chain: Esterase E4 (552 aa).

A signal peptide spans 1 to 23 (MKNTCGILLNLFLFIGCFLTCSA). N-linked (GlcNAc...) asparagine glycosylation occurs at Asn81. Cys89 and Cys106 are joined by a disulfide. The active-site Acyl-ester intermediate is the Ser214. A disulfide bond links Cys266 and Cys277. Asn269 carries an N-linked (GlcNAc...) asparagine glycan. Glu339 functions as the Charge relay system in the catalytic mechanism. N-linked (GlcNAc...) asparagine glycans are attached at residues Asn371, Asn404, and Asn443. His463 serves as the catalytic Charge relay system.

This sequence belongs to the type-B carboxylesterase/lipase family.

It carries out the reaction a carboxylic ester + H2O = an alcohol + a carboxylate + H(+). In terms of biological role, overproduction of nonspecific esterases is a common mechanism of resistance to organophosphate insecticides. The polypeptide is Esterase E4 (Myzus persicae (Green peach aphid)).